The following is a 383-amino-acid chain: Erythronate-4-phosphate dehydrogenase (383 aa).

Substrate contacts are provided by Ser-45 and Thr-66. NAD(+) is bound by residues Asp-146 and Thr-175. Arg-208 is an active-site residue. NAD(+) is bound at residue Asp-232. Residue Glu-237 is part of the active site. The active-site Proton donor is the His-254. NAD(+) is bound at residue Gly-257.

This sequence belongs to the D-isomer specific 2-hydroxyacid dehydrogenase family. PdxB subfamily. In terms of assembly, homodimer.

The protein localises to the cytoplasm. It carries out the reaction 4-phospho-D-erythronate + NAD(+) = (R)-3-hydroxy-2-oxo-4-phosphooxybutanoate + NADH + H(+). The protein operates within cofactor biosynthesis; pyridoxine 5'-phosphate biosynthesis; pyridoxine 5'-phosphate from D-erythrose 4-phosphate: step 2/5. In terms of biological role, catalyzes the oxidation of erythronate-4-phosphate to 3-hydroxy-2-oxo-4-phosphonooxybutanoate. This chain is Erythronate-4-phosphate dehydrogenase, found in Chromohalobacter salexigens (strain ATCC BAA-138 / DSM 3043 / CIP 106854 / NCIMB 13768 / 1H11).